The primary structure comprises 332 residues: Ribosomal RNA small subunit methyltransferase C (332 aa).

Belongs to the methyltransferase superfamily. RsmC family. As to quaternary structure, monomer.

It is found in the cytoplasm. It catalyses the reaction guanosine(1207) in 16S rRNA + S-adenosyl-L-methionine = N(2)-methylguanosine(1207) in 16S rRNA + S-adenosyl-L-homocysteine + H(+). Its function is as follows. Specifically methylates the guanine in position 1207 of 16S rRNA in the 30S particle. In Pseudomonas putida (strain ATCC 47054 / DSM 6125 / CFBP 8728 / NCIMB 11950 / KT2440), this protein is Ribosomal RNA small subunit methyltransferase C.